The chain runs to 559 residues: Glucans biosynthesis protein G (559 aa).

A signal peptide spans 1–37 (MVSLLSCGTSASSHIVKKALTRLSLAMAAGLCFNLAA).

It belongs to the OpgD/OpgG family.

The protein localises to the periplasm. It participates in glycan metabolism; osmoregulated periplasmic glucan (OPG) biosynthesis. Functionally, involved in the biosynthesis of osmoregulated periplasmic glucans (OPGs). The chain is Glucans biosynthesis protein G from Shewanella frigidimarina (strain NCIMB 400).